The primary structure comprises 396 residues: Period circadian protein (396 aa).

4 disordered regions span residues 27 to 120 (VTAP…APPV), 167 to 188 (SGPGPGHGHGIKRGGSHSWEGE), 253 to 275 (GGNGNVGSGNGNNNQPSTNQYTQ), and 333 to 362 (SPSSTNTNPNRPHKHAHVHNSSEKPSTSQA). A compositionally biased stretch (gly residues) spans 93 to 114 (GTSGTGNSGDGGGGGGANGTGS). Residues 253–262 (GGNGNVGSGN) are compositionally biased toward gly residues. Low complexity predominate over residues 333-342 (SPSSTNTNPN).

As to quaternary structure, forms a heterodimer with timeless (TIM); the complex then translocates into the nucleus. In terms of processing, phosphorylated with a circadian rhythmicity, probably by the double-time protein (dbt). Phosphorylation could be implicated in the stability of per monomer and in the formation of heterodimer per-tim.

The protein resides in the nucleus. The protein localises to the cytoplasm. Its subcellular location is the perinuclear region. Functionally, essential for biological clock functions. Determines the period length of circadian and ultradian rhythms; an increase in PER dosage leads to shortened circadian rhythms and a decrease leads to lengthened circadian rhythms. Essential for the circadian rhythmicity of locomotor activity, eclosion behavior, and for the rhythmic component of the male courtship song that originates in the thoracic nervous system. The biological cycle depends on the rhythmic formation and nuclear localization of the TIM-PER complex. Light induces the degradation of TIM, which promotes elimination of PER. Nuclear activity of the heterodimer coordinatively regulates PER and TIM transcription through a negative feedback loop. Behaves as a negative element in circadian transcriptional loop. Does not appear to bind DNA, suggesting indirect transcriptional inhibition. The sequence is that of Period circadian protein (per) from Drosophila paulistorum (Fruit fly).